The chain runs to 497 residues: Glycerol kinase (497 aa).

Residue threonine 12 participates in ADP binding. The ATP site is built by threonine 12, threonine 13, and serine 14. Residue threonine 12 participates in sn-glycerol 3-phosphate binding. Residue arginine 16 coordinates ADP. Positions 82, 83, 134, and 243 each coordinate sn-glycerol 3-phosphate. Glycerol contacts are provided by arginine 82, glutamate 83, tyrosine 134, aspartate 243, and glutamine 244. ADP contacts are provided by threonine 265 and glycine 308. Residues threonine 265, glycine 308, glutamine 312, and glycine 411 each contribute to the ATP site. Glycine 411 serves as a coordination point for ADP.

It belongs to the FGGY kinase family.

It catalyses the reaction glycerol + ATP = sn-glycerol 3-phosphate + ADP + H(+). It participates in polyol metabolism; glycerol degradation via glycerol kinase pathway; sn-glycerol 3-phosphate from glycerol: step 1/1. With respect to regulation, inhibited by fructose 1,6-bisphosphate (FBP). Key enzyme in the regulation of glycerol uptake and metabolism. Catalyzes the phosphorylation of glycerol to yield sn-glycerol 3-phosphate. In Allorhizobium ampelinum (strain ATCC BAA-846 / DSM 112012 / S4) (Agrobacterium vitis (strain S4)), this protein is Glycerol kinase.